The chain runs to 644 residues: Exoribonuclease 2 (644 aa).

The RNB domain maps to 189-516 (RRDLTALNFV…NHRLLKAIVK (328 aa)). One can recognise an S1 motif domain in the interval 561-643 (DTRFAAEIID…ETRSIIARPV (83 aa)).

This sequence belongs to the RNR ribonuclease family. RNase II subfamily.

The protein localises to the cytoplasm. It catalyses the reaction Exonucleolytic cleavage in the 3'- to 5'-direction to yield nucleoside 5'-phosphates.. Its function is as follows. Involved in mRNA degradation. Hydrolyzes single-stranded polyribonucleotides processively in the 3' to 5' direction. The sequence is that of Exoribonuclease 2 from Enterobacter sp. (strain 638).